The primary structure comprises 154 residues: 3-hydroxyacyl-[acyl-carrier-protein] dehydratase FabZ (154 aa).

Histidine 60 is an active-site residue.

Belongs to the thioester dehydratase family. FabZ subfamily.

The protein resides in the cytoplasm. It catalyses the reaction a (3R)-hydroxyacyl-[ACP] = a (2E)-enoyl-[ACP] + H2O. Involved in unsaturated fatty acids biosynthesis. Catalyzes the dehydration of short chain beta-hydroxyacyl-ACPs and long chain saturated and unsaturated beta-hydroxyacyl-ACPs. The sequence is that of 3-hydroxyacyl-[acyl-carrier-protein] dehydratase FabZ from Haemophilus ducreyi (strain 35000HP / ATCC 700724).